Consider the following 170-residue polypeptide: MQVDEQRLRFRDAMASLAAAVNIVTTAGHAGRCGITATAVCSVTDTPPSVMVCINANSAMNPVFQGNGRLCINVLNHEQELMARHFVGMTGMAMEERFHQPCWQNGPLGQPVLNGALASLEGEISEVQTIGTHLVYLVAIKNIILSQEGHGLIYFKRRFHPVRLEMEAPV.

The protein belongs to the non-flavoprotein flavin reductase family. HpaC subfamily. Homodimer. 4-HPA 3-monooxygenase consists of a reductase component HpaC and an oxygenase component HpaB.

The catalysed reaction is a reduced flavin + NAD(+) = an oxidized flavin + NADH + 2 H(+). It functions in the pathway aromatic compound metabolism; 4-hydroxyphenylacetate degradation; pyruvate and succinate semialdehyde from 4-hydroxyphenylacetate: step 1/7. Catalyzes the reduction of free flavins (FMN, FAD and riboflavin) by NADH. Subsequently, the reduced flavins diffuse to the large HpaB component or to other electron acceptors such as cytochrome c and Fe(3+) ion. The polypeptide is 4-hydroxyphenylacetate 3-monooxygenase reductase component (hpaC) (Salmonella typhi).